Consider the following 399-residue polypeptide: 26S proteasome regulatory subunit S10B homolog B (399 aa).

180-187 (GPPGTGKT) is an ATP binding site. A Glycyl lysine isopeptide (Lys-Gly) (interchain with G-Cter in ubiquitin) cross-link involves residue Lys-203.

Belongs to the AAA ATPase family. As to quaternary structure, component of the 19S regulatory particle (RP/PA700) base subcomplex of the 26S proteasome. The 26S proteasome is composed of a core protease (CP), known as the 20S proteasome, capped at one or both ends by the 19S regulatory particle (RP/PA700). The RP/PA700 complex is composed of at least 17 different subunits in two subcomplexes, the base and the lid, which form the portions proximal and distal to the 20S proteolytic core, respectively.

It is found in the cytoplasm. The protein localises to the nucleus. In terms of biological role, the 26S proteasome is involved in the ATP-dependent degradation of ubiquitinated proteins. The regulatory (or ATPase) complex confers ATP dependency and substrate specificity to the 26S complex. The protein is 26S proteasome regulatory subunit S10B homolog B (RPT4B) of Arabidopsis thaliana (Mouse-ear cress).